The primary structure comprises 367 residues: Phosphoribosylaminoimidazole-succinocarboxamide synthase (367 aa).

The protein belongs to the SAICAR synthetase family.

The catalysed reaction is 5-amino-1-(5-phospho-D-ribosyl)imidazole-4-carboxylate + L-aspartate + ATP = (2S)-2-[5-amino-1-(5-phospho-beta-D-ribosyl)imidazole-4-carboxamido]succinate + ADP + phosphate + 2 H(+). It functions in the pathway purine metabolism; IMP biosynthesis via de novo pathway; 5-amino-1-(5-phospho-D-ribosyl)imidazole-4-carboxamide from 5-amino-1-(5-phospho-D-ribosyl)imidazole-4-carboxylate: step 1/2. This chain is Phosphoribosylaminoimidazole-succinocarboxamide synthase, found in Shewanella piezotolerans (strain WP3 / JCM 13877).